The following is a 264-amino-acid chain: Thymidylate synthase (264 aa).

Arg21 is a dUMP binding site. A (6R)-5,10-methylene-5,6,7,8-tetrahydrofolate-binding site is contributed by His51. 126 to 127 contacts dUMP; that stretch reads RR. The active-site Nucleophile is Cys146. Residues 166–169, Asn177, and 207–209 each bind dUMP; these read RSAD and HLY. Residue Asp169 participates in (6R)-5,10-methylene-5,6,7,8-tetrahydrofolate binding. Residue Ala263 coordinates (6R)-5,10-methylene-5,6,7,8-tetrahydrofolate.

This sequence belongs to the thymidylate synthase family. Bacterial-type ThyA subfamily. As to quaternary structure, homodimer.

The protein resides in the cytoplasm. It catalyses the reaction dUMP + (6R)-5,10-methylene-5,6,7,8-tetrahydrofolate = 7,8-dihydrofolate + dTMP. The protein operates within pyrimidine metabolism; dTTP biosynthesis. Catalyzes the reductive methylation of 2'-deoxyuridine-5'-monophosphate (dUMP) to 2'-deoxythymidine-5'-monophosphate (dTMP) while utilizing 5,10-methylenetetrahydrofolate (mTHF) as the methyl donor and reductant in the reaction, yielding dihydrofolate (DHF) as a by-product. This enzymatic reaction provides an intracellular de novo source of dTMP, an essential precursor for DNA biosynthesis. This is Thymidylate synthase from Methylobacterium nodulans (strain LMG 21967 / CNCM I-2342 / ORS 2060).